The following is a 991-amino-acid chain: KAT8 regulatory NSL complex subunit 1-like protein (991 aa).

Lysine 136 is covalently cross-linked (Glycyl lysine isopeptide (Lys-Gly) (interchain with G-Cter in SUMO2)). The segment at 443–462 (VNSQVPQRSEEPLPEHDFEM) is disordered. The span at 450–461 (RSEEPLPEHDFE) shows a compositional bias: basic and acidic residues. Phosphoserine is present on serine 463. Residues 749–763 (ANVTSRTQNPSSQNT) show a composition bias toward polar residues. The disordered stretch occupies residues 749 to 770 (ANVTSRTQNPSSQNTSRRRLRS). The PEHE domain maps to 798-919 (EILTPRWRKV…DGQEDKSLRW (122 aa)). Lysine 863 carries the N6-acetyllysine modification.

Post-translationally, acetylated on lysine residues by KAT8 upon ionizing radiation-induced DNA damage; deacetylated by HDAC3.

This Mus musculus (Mouse) protein is KAT8 regulatory NSL complex subunit 1-like protein (Kansl1l).